The primary structure comprises 204 residues: Crossover junction endodeoxyribonuclease RuvC (204 aa).

Active-site residues include aspartate 7, glutamate 68, and aspartate 141. 3 residues coordinate Mg(2+): aspartate 7, glutamate 68, and aspartate 141. Residues 164–204 form a disordered region; the sequence is QAVAAHRTSGASRTPGAAGTPGPSRTPGAPGTSRTLKGRTA.

This sequence belongs to the RuvC family. As to quaternary structure, homodimer which binds Holliday junction (HJ) DNA. The HJ becomes 2-fold symmetrical on binding to RuvC with unstacked arms; it has a different conformation from HJ DNA in complex with RuvA. In the full resolvosome a probable DNA-RuvA(4)-RuvB(12)-RuvC(2) complex forms which resolves the HJ. Requires Mg(2+) as cofactor.

The protein localises to the cytoplasm. The enzyme catalyses Endonucleolytic cleavage at a junction such as a reciprocal single-stranded crossover between two homologous DNA duplexes (Holliday junction).. The RuvA-RuvB-RuvC complex processes Holliday junction (HJ) DNA during genetic recombination and DNA repair. Endonuclease that resolves HJ intermediates. Cleaves cruciform DNA by making single-stranded nicks across the HJ at symmetrical positions within the homologous arms, yielding a 5'-phosphate and a 3'-hydroxyl group; requires a central core of homology in the junction. The consensus cleavage sequence is 5'-(A/T)TT(C/G)-3'. Cleavage occurs on the 3'-side of the TT dinucleotide at the point of strand exchange. HJ branch migration catalyzed by RuvA-RuvB allows RuvC to scan DNA until it finds its consensus sequence, where it cleaves and resolves the cruciform DNA. The chain is Crossover junction endodeoxyribonuclease RuvC from Streptomyces griseus subsp. griseus (strain JCM 4626 / CBS 651.72 / NBRC 13350 / KCC S-0626 / ISP 5235).